A 225-amino-acid polypeptide reads, in one-letter code: UPF0758 protein Ssed_0385 (225 aa).

Residues 102 to 224 enclose the MPN domain; it reads ILSDPDLTRD…IVSFAERGWI (123 aa). Residues H173, H175, and D186 each coordinate Zn(2+). Residues 173-186 carry the JAMM motif motif; that stretch reads HNHPSGVAEPSLAD.

This sequence belongs to the UPF0758 family.

The chain is UPF0758 protein Ssed_0385 from Shewanella sediminis (strain HAW-EB3).